A 301-amino-acid polypeptide reads, in one-letter code: Diaminopimelate epimerase (301 aa).

Asparagine 15, glutamine 47, and asparagine 67 together coordinate substrate. Cysteine 76 acts as the Proton donor in catalysis. Substrate-binding positions include 77-78, asparagine 163, asparagine 197, and 215-216; these read GN and ER. The active-site Proton acceptor is cysteine 224. 225-226 is a binding site for substrate; the sequence is GS.

Belongs to the diaminopimelate epimerase family. As to quaternary structure, homodimer.

The protein localises to the cytoplasm. The enzyme catalyses (2S,6S)-2,6-diaminopimelate = meso-2,6-diaminopimelate. Its pathway is amino-acid biosynthesis; L-lysine biosynthesis via DAP pathway; DL-2,6-diaminopimelate from LL-2,6-diaminopimelate: step 1/1. Catalyzes the stereoinversion of LL-2,6-diaminopimelate (L,L-DAP) to meso-diaminopimelate (meso-DAP), a precursor of L-lysine and an essential component of the bacterial peptidoglycan. In Rhizobium meliloti (strain 1021) (Ensifer meliloti), this protein is Diaminopimelate epimerase.